A 115-amino-acid polypeptide reads, in one-letter code: MAKYSSKINKIRTFALSLVFIGFIIMYVGVFFRSSVLLMSVFMILGVLSILLSTAVYFWIGMLSTKAVQVVCPNCEKPTKILGRVDMCMHCREPLTLDKNLEGKEFNESYNRKSQ.

2 helical membrane passes run 18 to 38 (LVFIGFIIMYVGVFFRSSVLL) and 41 to 61 (VFMILGVLSILLSTAVYFWIG).

The protein belongs to the UPF0295 family.

It is found in the cell membrane. The chain is UPF0295 protein BLi00901/BL05075 from Bacillus licheniformis (strain ATCC 14580 / DSM 13 / JCM 2505 / CCUG 7422 / NBRC 12200 / NCIMB 9375 / NCTC 10341 / NRRL NRS-1264 / Gibson 46).